The sequence spans 120 residues: MFLLYEYDIFWAFLIISSVIPIFAFIISGVLAPISKGPEKLSSYESGIEPMGDAWLQFRICYYMFALVFVVFDVETVFLYPWAMSFDILGVSVFIEALIFVLILIVGSIYAWRKGALEWS.

3 helical membrane passes run 9–29 (IFWA…IISG), 60–80 (ICYY…VFLY), and 88–108 (ILGV…IVGS).

Belongs to the complex I subunit 3 family. As to quaternary structure, NDH is composed of at least 16 different subunits, 5 of which are encoded in the nucleus.

It localises to the plastid. It is found in the chloroplast thylakoid membrane. It carries out the reaction a plastoquinone + NADH + (n+1) H(+)(in) = a plastoquinol + NAD(+) + n H(+)(out). The enzyme catalyses a plastoquinone + NADPH + (n+1) H(+)(in) = a plastoquinol + NADP(+) + n H(+)(out). In terms of biological role, NDH shuttles electrons from NAD(P)H:plastoquinone, via FMN and iron-sulfur (Fe-S) centers, to quinones in the photosynthetic chain and possibly in a chloroplast respiratory chain. The immediate electron acceptor for the enzyme in this species is believed to be plastoquinone. Couples the redox reaction to proton translocation, and thus conserves the redox energy in a proton gradient. This chain is NAD(P)H-quinone oxidoreductase subunit 3, chloroplastic, found in Morus indica (Mulberry).